The primary structure comprises 310 residues: p-hydroxybenzoic acid efflux pump subunit AaeA (310 aa).

A helical membrane pass occupies residues A12 to Y32.

This sequence belongs to the membrane fusion protein (MFP) (TC 8.A.1) family.

Its subcellular location is the cell inner membrane. Forms an efflux pump with AaeB. The protein is p-hydroxybenzoic acid efflux pump subunit AaeA of Escherichia coli O127:H6 (strain E2348/69 / EPEC).